The sequence spans 365 residues: Protein RecA (365 aa).

Gly-73–Thr-80 provides a ligand contact to ATP.

Belongs to the RecA family.

It is found in the cytoplasm. Its function is as follows. Can catalyze the hydrolysis of ATP in the presence of single-stranded DNA, the ATP-dependent uptake of single-stranded DNA by duplex DNA, and the ATP-dependent hybridization of homologous single-stranded DNAs. It interacts with LexA causing its activation and leading to its autocatalytic cleavage. The protein is Protein RecA of Prochlorococcus marinus (strain MIT 9215).